A 174-amino-acid polypeptide reads, in one-letter code: NADH-quinone oxidoreductase subunit I (174 aa).

4Fe-4S ferredoxin-type domains are found at residues 44 to 74 (LNRYPDGLEKCIGCELCAWACPADAIYVEGD) and 90 to 119 (RVYQINYLRCIGCGLCIEACPTRALTMTND). [4Fe-4S] cluster contacts are provided by cysteine 54, cysteine 57, cysteine 60, cysteine 64, cysteine 99, cysteine 102, cysteine 105, and cysteine 109.

It belongs to the complex I 23 kDa subunit family. In terms of assembly, NDH-1 is composed of 14 different subunits. Subunits NuoA, H, J, K, L, M, N constitute the membrane sector of the complex. It depends on [4Fe-4S] cluster as a cofactor.

The protein localises to the cell membrane. The enzyme catalyses a quinone + NADH + 5 H(+)(in) = a quinol + NAD(+) + 4 H(+)(out). In terms of biological role, NDH-1 shuttles electrons from NADH, via FMN and iron-sulfur (Fe-S) centers, to quinones in the respiratory chain. The immediate electron acceptor for the enzyme in this species is believed to be menaquinone. Couples the redox reaction to proton translocation (for every two electrons transferred, four hydrogen ions are translocated across the cytoplasmic membrane), and thus conserves the redox energy in a proton gradient. In Mycobacterium sp. (strain JLS), this protein is NADH-quinone oxidoreductase subunit I.